The chain runs to 191 residues: Elongation factor P (191 aa).

Lys-34 carries the post-translational modification N6-(3,6-diaminohexanoyl)-5-hydroxylysine.

Belongs to the elongation factor P family. May be beta-lysylated on the epsilon-amino group of Lys-34 by the combined action of EpmA and EpmB, and then hydroxylated on the C5 position of the same residue by EpmC (if this protein is present). Lysylation is critical for the stimulatory effect of EF-P on peptide-bond formation. The lysylation moiety may extend toward the peptidyltransferase center and stabilize the terminal 3-CCA end of the tRNA. Hydroxylation of the C5 position on Lys-34 may allow additional potential stabilizing hydrogen-bond interactions with the P-tRNA.

It is found in the cytoplasm. Its pathway is protein biosynthesis; polypeptide chain elongation. Involved in peptide bond synthesis. Alleviates ribosome stalling that occurs when 3 or more consecutive Pro residues or the sequence PPG is present in a protein, possibly by augmenting the peptidyl transferase activity of the ribosome. Modification of Lys-34 is required for alleviation. The protein is Elongation factor P of Psychrobacter sp. (strain PRwf-1).